The following is a 684-amino-acid chain: Kinesin-like protein KIN-13B (684 aa).

Disordered regions lie at residues 1–31 and 71–103; these read MSGR…SNGR and GNEF…SPGL. Polar residues-rich tracts occupy residues 18–31 and 79–91; these read LSDN…SNGR and TTPQ…TNQR. Residues 169–492 form the Kinesin motor domain; that stretch reads KIKVVVRKRP…LRYADRVKSL (324 aa). 258–265 contacts ATP; it reads GQTGSGKT. A disordered region spans residues 574–594; it reads KPTIQMKSRDMPRPDMKKSNS. Residues 580-594 are compositionally biased toward basic and acidic residues; sequence KSRDMPRPDMKKSNS. The stretch at 596-626 forms a coiled coil; the sequence is DNLNALLQEEEDLVNAHRKQVEDTMNIVKEE.

It belongs to the TRAFAC class myosin-kinesin ATPase superfamily. Kinesin family. KIN-13 subfamily.

Acts redundantly with KIN13A to modulate cell wall synthesis and cell expansion via the THE1 pathway. The chain is Kinesin-like protein KIN-13B from Arabidopsis thaliana (Mouse-ear cress).